A 168-amino-acid chain; its full sequence is Diphosphoinositol polyphosphate phosphohydrolase 1 (168 aa).

The residue at position 1 (Met1) is an N-acetylmethionine. Residues Arg10, Lys18 to Arg20, and Ser39 to Arg41 each bind substrate. The 126-residue stretch at Tyr17 to Ala142 folds into the Nudix hydrolase domain. Mg(2+)-binding residues include Gly50 and Glu66. A Nudix box motif is present at residues Gly51–Gly72. Glu69 serves as the catalytic Proton acceptor. A Mg(2+)-binding site is contributed by Glu70. Substrate contacts are provided by residues Arg89–His91, Arg115, and Lys133.

Belongs to the Nudix hydrolase family. DIPP subfamily. Monomer. It depends on Mg(2+) as a cofactor. Mn(2+) serves as cofactor. The cofactor is Zn(2+).

Its subcellular location is the cytoplasm. It localises to the nucleus. The enzyme catalyses diphospho-myo-inositol polyphosphate + H2O = myo-inositol polyphosphate + phosphate.. The catalysed reaction is 5-diphospho-1D-myo-inositol 1,2,3,4,6-pentakisphosphate + H2O = 1D-myo-inositol hexakisphosphate + phosphate + H(+). It catalyses the reaction 3,5-bis(diphospho)-1D-myo-inositol 1,2,4,6-tetrakisphosphate + H2O = 3-diphospho-1D-myo-inositol 1,2,4,5,6-pentakisphosphate + phosphate + 2 H(+). It carries out the reaction [phosphate](n+1) + n H2O = (n+1) phosphate + n H(+). The enzyme catalyses P(1),P(5)-bis(5'-adenosyl) pentaphosphate + H2O = ADP + ATP + 2 H(+). The catalysed reaction is P(1),P(6)-bis(5'-adenosyl) hexaphosphate + H2O = 2 ATP + 2 H(+). It catalyses the reaction P(1),P(4)-bis(5'-adenosyl) tetraphosphate + H2O = AMP + ATP + 2 H(+). It carries out the reaction a 5'-end (N(7)-methyl 5'-triphosphoguanosine)-ribonucleoside in mRNA + H2O = N(7)-methyl-GMP + a 5'-end diphospho-ribonucleoside in mRNA + 2 H(+). The enzyme catalyses a 5'-end (N(7)-methyl 5'-triphosphoguanosine)-ribonucleoside in mRNA + H2O = N(7)-methyl-GDP + a 5'-end phospho-ribonucleoside in mRNA + 2 H(+). Its activity is regulated as follows. Diphosphoinositol polyphosphate phosphohydrolase is inhibited by fluoride and InsP6. Cleaves a beta-phosphate from the diphosphate groups in PP-InsP5 (diphosphoinositol pentakisphosphate) and [PP]2-InsP4 (bisdiphosphoinositol tetrakisphosphate), suggesting that it may play a role in signal transduction. InsP6 (inositol hexakisphosphate) is not a substrate. Acts as a negative regulator of the ERK1/2 pathway. Also able to catalyze the hydrolysis of dinucleoside oligophosphates, with diadenosine 5',5'''-P1,P6-hexaphosphate (Ap6A) and diadenosine 5',5'''- P1,P5-pentaphosphate (Ap5A) being the preferred substrates. The major reaction products are ADP and p4a from Ap6A and ADP and ATP from Ap5A. Also able to hydrolyze 5- phosphoribose 1-diphosphate. Acts as a decapping enzyme that can hydrolyze both monomethylated and unmethylated capped RNAs. Hydrolyzes monomethylated capped RNA after both the alpha- and beta-phosphates generating m7GMP + ppRNA and m7GDP + pRNA. Modulates the stability of a subset of mRNAs implicated in cell motility. Divalent cations zinc, magnesium and manganese determine its substrate specificity. Exhibits endopolyphosphatase activity in the presence of zinc ions. Exhibits diphosphoinositol polyphosphate phosphohydrolase in the presence of magnesium ions and diadenosine hexaphosphate hydrolase activity in the presence of manganese ions. Plays an important role in limiting DNA damage and maintaining cell survival upon oxidative stress via its endopolyphosphatase activity. The protein is Diphosphoinositol polyphosphate phosphohydrolase 1 of Rattus norvegicus (Rat).